A 614-amino-acid chain; its full sequence is ATP-dependent zinc metalloprotease FtsH (614 aa).

Residues M1 to R5 lie on the Cytoplasmic side of the membrane. A helical transmembrane segment spans residues W6–Q26. Residues T27–S127 lie on the Periplasmic side of the membrane. The chain crosses the membrane as a helical span at residues I128–V148. The Cytoplasmic segment spans residues V149–G614. G214–T221 contributes to the ATP binding site. Zn(2+) is bound at residue H436. The active site involves E437. The Zn(2+) site is built by H440 and D513.

The protein in the central section; belongs to the AAA ATPase family. It in the C-terminal section; belongs to the peptidase M41 family. In terms of assembly, homohexamer. Zn(2+) is required as a cofactor.

The protein localises to the cell inner membrane. Functionally, acts as a processive, ATP-dependent zinc metallopeptidase for both cytoplasmic and membrane proteins. Plays a role in the quality control of integral membrane proteins. The protein is ATP-dependent zinc metalloprotease FtsH of Opitutus terrae (strain DSM 11246 / JCM 15787 / PB90-1).